Here is a 529-residue protein sequence, read N- to C-terminus: Glycerol kinase 5 (529 aa).

S28 and S29 together coordinate ATP. 3 residues coordinate glycerol: R98, D275, and Q276. Residues T297, G340, and G440 each coordinate ATP.

It belongs to the FGGY kinase family.

Its subcellular location is the cytoplasm. It carries out the reaction glycerol + ATP = sn-glycerol 3-phosphate + ADP + H(+). The protein operates within polyol metabolism; glycerol degradation via glycerol kinase pathway; sn-glycerol 3-phosphate from glycerol: step 1/1. Its function is as follows. Skin-specific kinase that plays a key role in glycerol metabolism, catalyzing its phosphorylation to produce sn-glycerol 3-phosphate. Involved in skin-specific regulation of sterol regulatory element-binding protein (SREBP) processing and lipid biosynthesis. This is Glycerol kinase 5 from Homo sapiens (Human).